Here is a 375-residue protein sequence, read N- to C-terminus: Peptide-N(4)-(N-acetyl-beta-glucosaminyl)asparagine amidase (375 aa).

Residues C129, C132, C163, and C166 each contribute to the Zn(2+) site. C189 (nucleophile) is an active-site residue. Active-site residues include H219 and D236. E239 contacts substrate. A disordered region spans residues 345–375 (KIEVSRTHNIPTGRQTGDAEWTKSRGEDGNE). Residues 364–375 (EWTKSRGEDGNE) show a composition bias toward basic and acidic residues.

It belongs to the transglutaminase-like superfamily. PNGase family. Zn(2+) is required as a cofactor.

Its subcellular location is the cytoplasm. It carries out the reaction Hydrolysis of an N(4)-(acetyl-beta-D-glucosaminyl)asparagine residue in which the glucosamine residue may be further glycosylated, to yield a (substituted) N-acetyl-beta-D-glucosaminylamine and a peptide containing an aspartate residue.. In terms of biological role, specifically deglycosylates the denatured form of N-linked glycoproteins in the cytoplasm and assists their proteasome-mediated degradation. Cleaves the beta-aspartyl-glucosamine (GlcNAc) of the glycan and the amide side chain of Asn, converting Asn to Asp. Prefers proteins containing high-mannose over those bearing complex type oligosaccharides. Can recognize misfolded proteins in the endoplasmic reticulum that are exported to the cytosol to be destroyed and deglycosylate them, while it has no activity toward native proteins. Deglycosylation is a prerequisite for subsequent proteasome-mediated degradation of some, but not all, misfolded glycoproteins. The protein is Peptide-N(4)-(N-acetyl-beta-glucosaminyl)asparagine amidase (PNG1) of Debaryomyces hansenii (strain ATCC 36239 / CBS 767 / BCRC 21394 / JCM 1990 / NBRC 0083 / IGC 2968) (Yeast).